A 505-amino-acid polypeptide reads, in one-letter code: L-amino-acid oxidase (505 aa).

Residues 1–18 (MNVFLMFSLLFLAALGSC) form the signal peptide. C28 and C191 are oxidised to a cystine. Residues 61–62 (MS), 81–82 (EA), R89, and 105–108 (GPMR) each bind FAD. Substrate is bound at residue R108. N190 carries N-linked (GlcNAc...) asparagine glycosylation. H241 lines the substrate pocket. V279 serves as a coordination point for FAD. C349 and C430 are disulfide-bonded. An N-linked (GlcNAc...) asparagine glycan is attached at N379. Y390 lines the substrate pocket. Residues E475 and 482–487 (GWIDST) each bind FAD. 482–483 (GW) is a substrate binding site.

It belongs to the flavin monoamine oxidase family. FIG1 subfamily. In terms of assembly, monomer. This is in contrast with most of its orthologs, that are non-covalently linked homodimers. The cofactor is FAD. Post-translationally, N-glycosylated. As to expression, expressed by the venom gland.

It localises to the secreted. The catalysed reaction is an L-alpha-amino acid + O2 + H2O = a 2-oxocarboxylate + H2O2 + NH4(+). It catalyses the reaction L-leucine + O2 + H2O = 4-methyl-2-oxopentanoate + H2O2 + NH4(+). Its function is as follows. Catalyzes an oxidative deamination of predominantly hydrophobic and aromatic L-amino acids, thus producing hydrogen peroxide that may contribute to the diverse toxic effects of this enzyme. Shows activity on L-Leu. Exhibits diverse biological activities, such as hemorrhage, edema, antibacterial and antiparasitic activities, as well as regulation of platelet aggregation. Effects of snake L-amino oxidases on platelets are controversial, since they either induce aggregation or inhibit agonist-induced aggregation. These different effects are probably due to different experimental conditions. This protein has an ability to induce hemolysis and apoptosis. The sequence is that of L-amino-acid oxidase from Protobothrops flavoviridis (Habu).